Here is a 287-residue protein sequence, read N- to C-terminus: Movement protein BC1 (287 aa).

The protein belongs to the begomovirus movement protein BC1 family. In terms of assembly, binds to dimeric supercoiled plasmid DNA. In terms of processing, phosphorylated.

The protein resides in the host cell membrane. The protein localises to the host microsome membrane. Its subcellular location is the host endoplasmic reticulum membrane. Its function is as follows. Transports viral genome to neighboring plant cells directly through plasmosdesmata, without any budding. The movement protein allows efficient cell to cell propagation, by bypassing the host cell wall barrier. Begomovirus genome is shuttled out of nucleus by Nuclear shuttle protein (NSP) and the movement protein transports the DNA-NSP complex to cell plasmodesmata and facilitates further movement across the cell wall. The sequence is that of Movement protein BC1 from Manihot esculenta (Cassava).